Consider the following 174-residue polypeptide: Probable adenylyl-sulfate kinase (174 aa).

10-17 (GPSGAGKT) contacts ATP. Serine 84 functions as the Phosphoserine intermediate in the catalytic mechanism.

The protein belongs to the APS kinase family.

It carries out the reaction adenosine 5'-phosphosulfate + ATP = 3'-phosphoadenylyl sulfate + ADP + H(+). The protein operates within sulfur metabolism; hydrogen sulfide biosynthesis; sulfite from sulfate: step 2/3. Functionally, catalyzes the synthesis of activated sulfate. In Pyrococcus abyssi (strain GE5 / Orsay), this protein is Probable adenylyl-sulfate kinase (cysC).